The sequence spans 189 residues: Peptidyl-tRNA hydrolase (189 aa).

Tyrosine 14 is a binding site for tRNA. Catalysis depends on histidine 19, which acts as the Proton acceptor. Positions 64, 66, and 112 each coordinate tRNA.

It belongs to the PTH family. As to quaternary structure, monomer.

It localises to the cytoplasm. The catalysed reaction is an N-acyl-L-alpha-aminoacyl-tRNA + H2O = an N-acyl-L-amino acid + a tRNA + H(+). Its function is as follows. Hydrolyzes ribosome-free peptidyl-tRNAs (with 1 or more amino acids incorporated), which drop off the ribosome during protein synthesis, or as a result of ribosome stalling. In terms of biological role, catalyzes the release of premature peptidyl moieties from peptidyl-tRNA molecules trapped in stalled 50S ribosomal subunits, and thus maintains levels of free tRNAs and 50S ribosomes. This Clostridium botulinum (strain ATCC 19397 / Type A) protein is Peptidyl-tRNA hydrolase.